Here is a 150-residue protein sequence, read N- to C-terminus: Putative antitoxin VapB45 (150 aa).

The interval 124 to 150 is disordered; it reads AQRPVAAGRPRPRPQRPVSDRVSDQRR. Residues 141 to 150 are compositionally biased toward basic and acidic residues; that stretch reads VSDRVSDQRR.

This sequence belongs to the phD/YefM antitoxin family.

In terms of biological role, possibly the antitoxin component of a type II toxin-antitoxin (TA) system. Its cognate toxin is VapC45 (Potential). The protein is Putative antitoxin VapB45 (vapB45) of Mycobacterium tuberculosis (strain CDC 1551 / Oshkosh).